We begin with the raw amino-acid sequence, 61 residues long: Bacteriocin leucocin-B (61 aa).

The propeptide occupies M1–G24. C33 and C38 are oxidised to a cystine.

This sequence belongs to the bacteriocin class IIA/YGNGV family.

The protein localises to the secreted. Active against L.monocytogenes and several lactic acid bacteria. This Leuconostoc carnosum protein is Bacteriocin leucocin-B.